A 365-amino-acid chain; its full sequence is Membrane-bound lytic murein transglycosylase C (365 aa).

The signal sequence occupies residues 1-19; it reads MKKYTKYLPLLLIIPFLAA. Cys-20 is lipidated: N-palmitoyl cysteine. Cys-20 carries S-diacylglycerol cysteine lipidation.

Belongs to the transglycosylase Slt family.

Its subcellular location is the cell outer membrane. It catalyses the reaction Exolytic cleavage of the (1-&gt;4)-beta-glycosidic linkage between N-acetylmuramic acid (MurNAc) and N-acetylglucosamine (GlcNAc) residues in peptidoglycan, from either the reducing or the non-reducing ends of the peptidoglycan chains, with concomitant formation of a 1,6-anhydrobond in the MurNAc residue.. Functionally, murein-degrading enzyme. May play a role in recycling of muropeptides during cell elongation and/or cell division. The chain is Membrane-bound lytic murein transglycosylase C from Actinobacillus pleuropneumoniae serotype 5b (strain L20).